The following is a 784-amino-acid chain: DNA ligase (784 aa).

Residues 35–39, 84–85, and Glu-117 each bind NAD(+); these read DAEYD and SL. Lys-119 serves as the catalytic N6-AMP-lysine intermediate. Positions 140, 177, 294, and 318 each coordinate NAD(+). Cys-412, Cys-415, Cys-442, and Cys-448 together coordinate Zn(2+). Residues 703-784 enclose the BRCT domain; it reads AEGLPLAGQT…FLALLRQLES (82 aa).

It belongs to the NAD-dependent DNA ligase family. LigA subfamily. Mg(2+) serves as cofactor. Mn(2+) is required as a cofactor.

It carries out the reaction NAD(+) + (deoxyribonucleotide)n-3'-hydroxyl + 5'-phospho-(deoxyribonucleotide)m = (deoxyribonucleotide)n+m + AMP + beta-nicotinamide D-nucleotide.. In terms of biological role, DNA ligase that catalyzes the formation of phosphodiester linkages between 5'-phosphoryl and 3'-hydroxyl groups in double-stranded DNA using NAD as a coenzyme and as the energy source for the reaction. It is essential for DNA replication and repair of damaged DNA. The polypeptide is DNA ligase (Azotobacter vinelandii (strain DJ / ATCC BAA-1303)).